The chain runs to 654 residues: Probable Xaa-Pro aminopeptidase P (654 aa).

Mn(2+) is bound by residues aspartate 449, aspartate 460, glutamate 558, and glutamate 572.

This sequence belongs to the peptidase M24B family. Requires Mn(2+) as cofactor.

It carries out the reaction Release of any N-terminal amino acid, including proline, that is linked to proline, even from a dipeptide or tripeptide.. Its function is as follows. Catalyzes the removal of a penultimate prolyl residue from the N-termini of peptides. The sequence is that of Probable Xaa-Pro aminopeptidase P (ampp) from Neosartorya fischeri (strain ATCC 1020 / DSM 3700 / CBS 544.65 / FGSC A1164 / JCM 1740 / NRRL 181 / WB 181) (Aspergillus fischerianus).